The chain runs to 367 residues: Probable protein phosphatase 2C 57 (367 aa).

Residues 1–29 (MEEHRLGGGGGGGGGGGRPPIPGAAGRKL) form a disordered region. The segment covering 7–18 (GGGGGGGGGGGR) has biased composition (gly residues). Positions 67–331 (RSGGWADIGS…DNLSVVVICF (265 aa)) constitute a PPM-type phosphatase domain. Mn(2+) is bound by residues aspartate 111, glycine 112, aspartate 279, and aspartate 322.

The protein belongs to the PP2C family. It depends on Mg(2+) as a cofactor. Mn(2+) is required as a cofactor.

It carries out the reaction O-phospho-L-seryl-[protein] + H2O = L-seryl-[protein] + phosphate. It catalyses the reaction O-phospho-L-threonyl-[protein] + H2O = L-threonyl-[protein] + phosphate. The polypeptide is Probable protein phosphatase 2C 57 (Oryza sativa subsp. japonica (Rice)).